The following is a 1436-amino-acid chain: DNA-directed RNA polymerase subunit beta' (1436 aa).

Cysteine 70, cysteine 72, cysteine 85, and cysteine 88 together coordinate Zn(2+). Positions 481, 483, and 485 each coordinate Mg(2+). Zn(2+)-binding residues include cysteine 829, cysteine 903, cysteine 910, and cysteine 913.

It belongs to the RNA polymerase beta' chain family. As to quaternary structure, the RNAP catalytic core consists of 2 alpha, 1 beta, 1 beta' and 1 omega subunit. When a sigma factor is associated with the core the holoenzyme is formed, which can initiate transcription. Requires Mg(2+) as cofactor. Zn(2+) is required as a cofactor.

The enzyme catalyses RNA(n) + a ribonucleoside 5'-triphosphate = RNA(n+1) + diphosphate. In terms of biological role, DNA-dependent RNA polymerase catalyzes the transcription of DNA into RNA using the four ribonucleoside triphosphates as substrates. This chain is DNA-directed RNA polymerase subunit beta', found in Flavobacterium johnsoniae (strain ATCC 17061 / DSM 2064 / JCM 8514 / BCRC 14874 / CCUG 350202 / NBRC 14942 / NCIMB 11054 / UW101) (Cytophaga johnsonae).